A 357-amino-acid polypeptide reads, in one-letter code: Crh-like protein 1 (357 aa).

Residues 1-17 (MMLPLLAVSAFASLGAA) form the signal peptide. Residues 20–220 (YTSCNPTNSL…WAGGETDYDE (201 aa)) enclose the GH16 domain. 2 N-linked (GlcNAc...) asparagine glycosylation sites follow: asparagine 52 and asparagine 92. The Nucleophile role is filled by glutamate 109. Glutamate 113 (proton donor) is an active-site residue. Glutamate 113 lines the chitin pocket. N-linked (GlcNAc...) asparagine glycosylation occurs at asparagine 131. Chitin is bound by residues lysine 193, tryptophan 197, and threonine 208. N-linked (GlcNAc...) asparagine glycosylation is found at asparagine 242 and asparagine 257. Glycine 326 carries GPI-anchor amidated glycine lipidation. Residues 327 to 357 (SASAVFTGAAVTNLPSFFFTVFFALAIALAF) constitute a propeptide, removed in mature form. Residues 337–357 (VTNLPSFFFTVFFALAIALAF) traverse the membrane as a helical segment.

Belongs to the glycosyl hydrolase 16 family. CRH1 subfamily. In terms of processing, the GPI-like anchor contains a phosphoceramide lipid group. The anchor position has not been determined.

It localises to the cell membrane. The protein localises to the secreted. It is found in the cell wall. The enzyme catalyses Random endo-hydrolysis of N-acetyl-beta-D-glucosaminide (1-&gt;4)-beta-linkages in chitin and chitodextrins.. Dual chitinase/transglycosylase that plays a role in cell wall architecture. Chitinase and transglycosylase activities are coupled. Required for the polysaccharide cross-linking at the septa and the cell wall. More specifically, transfers chitin to 1,6-beta-glucan in the cell wall. In Aspergillus fumigatus (strain ATCC MYA-4609 / CBS 101355 / FGSC A1100 / Af293) (Neosartorya fumigata), this protein is Crh-like protein 1.